The following is a 749-amino-acid chain: G-type lectin S-receptor-like serine/threonine-protein kinase At1g61460 (749 aa).

The N-terminal stretch at 1–25 (MRITFFASLLLFTNTIFISFSFAIA) is a signal peptide. Residues 26–145 (GINKESPLSI…FSGRTLWQSF (120 aa)) enclose the Bulb-type lectin domain. The Extracellular segment spans residues 26–392 (GINKESPLSI…ELGGNKRKKT (367 aa)). N-linked (GlcNAc...) asparagine glycans are attached at residues Asn54, Asn95, Asn118, and Asn135. The EGF-like; atypical domain maps to 247 to 280 (PAHSCDYYGVCGPFGICVKSVCKCFKGFIPKYIE). Disulfide bonds link Cys251/Cys263 and Cys257/Cys268. N-linked (GlcNAc...) asparagine glycans are attached at residues Asn286, Asn302, and Asn341. The PAN domain occupies 299–381 (CQENSTKKDA…GEILSIRLAR (83 aa)). 2 cysteine pairs are disulfide-bonded: Cys334–Cys355 and Cys338–Cys344. The helical transmembrane segment at 393 to 413 (ITASIVSLSLFLILGSTAFGF) threads the bilayer. Over 414-749 (WRYRVKHNAS…EMTKSVILGR (336 aa)) the chain is Cytoplasmic. In terms of domain architecture, Protein kinase spans 454 to 721 (FSLSNKLGQG…DLPSPKQPTF (268 aa)). ATP contacts are provided by residues 460 to 468 (LGQGGFGSV) and Lys482. Positions 543–560 (RKRLEIDWPKRFDIIQGI) are caM-binding. The active-site Proton acceptor is the Asp579.

Belongs to the protein kinase superfamily. Ser/Thr protein kinase family.

It is found in the cell membrane. The enzyme catalyses L-seryl-[protein] + ATP = O-phospho-L-seryl-[protein] + ADP + H(+). It carries out the reaction L-threonyl-[protein] + ATP = O-phospho-L-threonyl-[protein] + ADP + H(+). The polypeptide is G-type lectin S-receptor-like serine/threonine-protein kinase At1g61460 (Arabidopsis thaliana (Mouse-ear cress)).